A 251-amino-acid chain; its full sequence is Protein CMS1 (251 aa).

Positions 1 to 37 (MSLDNDINTKKRKLQDDEKPRKKRKHKRPTRDDDADL) are disordered.

It belongs to the CMS1 family.

The protein localises to the nucleus. Functionally, may play a role in the regulation of DNA replication and cell cycle control. The chain is Protein CMS1 (CSM1) from Chaetomium thermophilum (strain DSM 1495 / CBS 144.50 / IMI 039719) (Thermochaetoides thermophila).